The primary structure comprises 429 residues: Glutamate-1-semialdehyde 2,1-aminomutase (429 aa).

Residue lysine 264 is modified to N6-(pyridoxal phosphate)lysine.

The protein belongs to the class-III pyridoxal-phosphate-dependent aminotransferase family. HemL subfamily. Homodimer. Requires pyridoxal 5'-phosphate as cofactor.

It is found in the cytoplasm. The enzyme catalyses (S)-4-amino-5-oxopentanoate = 5-aminolevulinate. It participates in porphyrin-containing compound metabolism; protoporphyrin-IX biosynthesis; 5-aminolevulinate from L-glutamyl-tRNA(Glu): step 2/2. This is Glutamate-1-semialdehyde 2,1-aminomutase from Campylobacter curvus (strain 525.92).